Consider the following 271-residue polypeptide: Large ribosomal subunit protein uL15c (271 aa).

Disordered regions lie at residues 1–21 and 66–120; these read MASL…NNYP and SNVS…QKSR. The transit peptide at 1–61 directs the protein to the chloroplast; that stretch reads MASLLSLSST…KESTRLVVVA (61 aa). Over residues 66 to 76 the composition is skewed to low complexity; the sequence is SNVSPSIGSGS. Residues 91–101 show a composition bias toward basic residues; the sequence is SRKKGKRKGRG. A compositionally biased stretch (gly residues) spans 102 to 114; that stretch reads HAAGQGGSCGFGM.

Component of the chloroplast large ribosomal subunit (LSU). Mature 70S chloroplast ribosomes of higher plants consist of a small (30S) and a large (50S) subunit. The 30S small subunit contains 1 molecule of ribosomal RNA (16S rRNA) and 24 different proteins. The 50S large subunit contains 3 rRNA molecules (23S, 5S and 4.5S rRNA) and 33 different proteins.

Its subcellular location is the plastid. The protein localises to the chloroplast. Its function is as follows. Component of the chloroplast ribosome (chloro-ribosome), a dedicated translation machinery responsible for the synthesis of chloroplast genome-encoded proteins, including proteins of the transcription and translation machinery and components of the photosynthetic apparatus. The protein is Large ribosomal subunit protein uL15c (RPL15) of Spinacia oleracea (Spinach).